A 446-amino-acid polypeptide reads, in one-letter code: Gasdermin-A (446 aa).

Residues 1-252 (MTMFENVTRA…FILIQASDVG (252 aa)) form a triggers pyroptosis region. 9-13 (RALAR) provides a ligand contact to a cardiolipin. The next 4 beta stranded transmembrane spans lie at 78 to 95 (NFSF…DVDV), 99 to 120 (VKVK…TLSV), 164 to 180 (VTLE…SLPF), and 184 to 198 (LGLQ…AVTI).

It belongs to the gasdermin family. As to quaternary structure, homooligomer; homooligomeric ring-shaped pore complex containing 18-36 subunits when inserted in the membrane. Post-translationally, cleavage by bacterial SpeB relieves autoinhibition by releasing the N-terminal moiety (Gasdermin-A, N-terminal) that initiates pyroptosis. Palmitoylated. In terms of tissue distribution, expressed predominantly in the gastrointestinal (GI) tract and in the skin at a lower level. In the GI tract, the expression is highly restricted to the esophagus and forestomach.

It is found in the cytoplasm. Its subcellular location is the perinuclear region. It localises to the cytosol. The protein localises to the cell membrane. Its activity is regulated as follows. The full-length protein before cleavage is inactive: intramolecular interactions between N- and C-terminal domains mediate autoinhibition in the absence of activation signal. The intrinsic pyroptosis-inducing activity is carried by the released N-terminal moiety (Gasdermin-A, N-terminal) following cleavage by bacterial effector protein SpeB. This form constitutes the precursor of the pore-forming protein and acts as a sensor of bacterial infection: upon infection, specifically cleaved by bacterial effector protein SpeB in epithelial cells, releasing the N-terminal moiety (Gasdermin-A, N-terminal) that binds to membranes and forms pores, triggering pyroptosis. Its function is as follows. Pore-forming protein that causes membrane permeabilization and pyroptosis. Released upon cleavage by bacterial effector protein SpeB, and binds to membrane inner leaflet lipids. Homooligomerizes within the membrane and forms pores of 10-15 nanometers (nm) of inner diameter, triggering pyroptosis. Pyroptosis triggers the elimination of the infected skin cell, depriving the pathogen of its protective niche, while inducing an inflammatory response. This ultimately prevents bacterial penetration of the epithelial barrier and a subsequent systemic dissemination of the pathogen. Binds to cardiolipin and other acidic phospholipids, such as phosphatidylserine, which mediate its targeting to the inner leaflet membrane. The chain is Gasdermin-A (Gsdma) from Mus musculus (Mouse).